The chain runs to 1544 residues: Rho guanine nucleotide exchange factor 12 (1544 aa).

A disordered region spans residues 1-62 (MSGTQSTITD…KTKSSSEESR (62 aa)). S2 is subject to N-acetylserine. The span at 28-45 (SPTDKKQKVERIASHDFD) shows a compositional bias: basic and acidic residues. Position 41 is a phosphoserine (S41). In terms of domain architecture, PDZ spans 72–151 (CVIIQKDDNG…LTVQGRPPGS (80 aa)). Residues 194–262 (MGEENNVVHN…LSKATGSAQD (69 aa)) are a coiled coil. The tract at residues 247-346 (PQLQEQLSKA…SLVGSPSTRI (100 aa)) is disordered. Composition is skewed to polar residues over residues 249–260 (LQEQLSKATGSA) and 293–309 (DCSSGDASRPSSDNADS). Residue S309 is modified to Phosphoserine. Residues 313 to 329 (GPKERIYLEENPEKSET) show a composition bias toward basic and acidic residues. Residues 330–344 (IQDTDTQSLVGSPST) are compositionally biased toward polar residues. The residue at position 341 (S341) is a Phosphoserine. In terms of domain architecture, RGSL spans 367-558 (GQCSCFQSIE…LMYMKHLGVK (192 aa)). The tract at residues 570-706 (GRIGFLPKIK…GDTLDGTPRT (137 aa)) is disordered. The segment covering 582 to 592 (MKKDKEGEEKG) has biased composition (basic and acidic residues). Over residues 631-640 (STPSSVSPEP) the composition is skewed to polar residues. S637 carries the phosphoserine modification. Over residues 663–676 (ANSMSSVASGASFS) the composition is skewed to low complexity. T736 bears the Phosphothreonine mark. Residues 787–977 (KRQEVINELF…RQILNYVNQA (191 aa)) form the DH domain. Residues 1019 to 1132 (KMIHEGPLVW…WQDLICRMAA (114 aa)) form the PH domain. Positions 1138–1149 (STKPIPLPQSTP) are enriched in polar residues. The tract at residues 1138-1179 (STKPIPLPQSTPGEGDNDEEDPSKLKEEQHGISVTGLQSPDR) is disordered. Phosphoserine occurs at positions 1288, 1327, 1377, 1457, and 1541.

In terms of assembly, interacts with GNA12 and GNA13, probably through the RGS-like domain. Interacts with RHOA, PLXNB1 and PLXNB2. Interacts through its PDZ domain with IGF1R beta subunit. Interacts with GCSAM. Found in a complex with ARHGEF11 and ARHGEF12; binding to ARHGEF11 and ARHGEF12 enhances CDC42 GEF activity of PLEKHG4B, and PLEKHG4B, in turn, inhibits ARHGEF11- and ARHGEF12-mediated RHOA activation. In terms of tissue distribution, ubiquitously expressed. Isoform 2 is found in jejunum and testis.

It localises to the cytoplasm. Its subcellular location is the membrane. In terms of biological role, may play a role in the regulation of RhoA GTPase by guanine nucleotide-binding alpha-12 (GNA12) and alpha-13 (GNA13). Acts as guanine nucleotide exchange factor (GEF) for RhoA GTPase and may act as GTPase-activating protein (GAP) for GNA12 and GNA13. This chain is Rho guanine nucleotide exchange factor 12 (ARHGEF12), found in Homo sapiens (Human).